The following is a 198-amino-acid chain: Small ribosomal subunit protein eS1 (198 aa).

This sequence belongs to the eukaryotic ribosomal protein eS1 family.

The protein is Small ribosomal subunit protein eS1 of Methanospirillum hungatei JF-1 (strain ATCC 27890 / DSM 864 / NBRC 100397 / JF-1).